Here is a 188-residue protein sequence, read N- to C-terminus: Chitin synthase 1 (188 aa).

Belongs to the chitin synthase family. Class I subfamily.

The protein localises to the cell membrane. It catalyses the reaction [(1-&gt;4)-N-acetyl-beta-D-glucosaminyl](n) + UDP-N-acetyl-alpha-D-glucosamine = [(1-&gt;4)-N-acetyl-beta-D-glucosaminyl](n+1) + UDP + H(+). Its function is as follows. Polymerizes chitin, a structural polymer of the cell wall and septum, by transferring the sugar moiety of UDP-GlcNAc to the non-reducing end of the growing chitin polymer. In Ajellomyces dermatitidis (Blastomyces dermatitidis), this protein is Chitin synthase 1 (CHS1).